The chain runs to 163 residues: UPF0262 protein RPA4530 (163 aa).

Belongs to the UPF0262 family.

The protein is UPF0262 protein RPA4530 of Rhodopseudomonas palustris (strain ATCC BAA-98 / CGA009).